Reading from the N-terminus, the 453-residue chain is Bifunctional protein GlmU (453 aa).

Residues 1 to 225 form a pyrophosphorylase region; that stretch reads MNIVILAAGT…GWETLGVNSK (225 aa). UDP-N-acetyl-alpha-D-glucosamine is bound by residues 6–9, K20, Q71, 76–77, 98–100, G135, E150, N165, and N223; these read LAAG, GT, and YGD. Position 100 (D100) interacts with Mg(2+). N223 provides a ligand contact to Mg(2+). The segment at 226–246 is linker; that stretch reads AQLAELERIHQRNLADALLAA. Positions 247-453 are N-acetyltransferase; the sequence is GVTLADPARI…GYVRPVKKKS (207 aa). Positions 329 and 347 each coordinate UDP-N-acetyl-alpha-D-glucosamine. H359 acts as the Proton acceptor in catalysis. UDP-N-acetyl-alpha-D-glucosamine is bound by residues Y362 and N373. Acetyl-CoA is bound by residues A376, 382 to 383, S401, and A419; that span reads NY.

This sequence in the N-terminal section; belongs to the N-acetylglucosamine-1-phosphate uridyltransferase family. The protein in the C-terminal section; belongs to the transferase hexapeptide repeat family. Homotrimer. Mg(2+) is required as a cofactor.

The protein localises to the cytoplasm. The enzyme catalyses alpha-D-glucosamine 1-phosphate + acetyl-CoA = N-acetyl-alpha-D-glucosamine 1-phosphate + CoA + H(+). It carries out the reaction N-acetyl-alpha-D-glucosamine 1-phosphate + UTP + H(+) = UDP-N-acetyl-alpha-D-glucosamine + diphosphate. Its pathway is nucleotide-sugar biosynthesis; UDP-N-acetyl-alpha-D-glucosamine biosynthesis; N-acetyl-alpha-D-glucosamine 1-phosphate from alpha-D-glucosamine 6-phosphate (route II): step 2/2. It functions in the pathway nucleotide-sugar biosynthesis; UDP-N-acetyl-alpha-D-glucosamine biosynthesis; UDP-N-acetyl-alpha-D-glucosamine from N-acetyl-alpha-D-glucosamine 1-phosphate: step 1/1. It participates in bacterial outer membrane biogenesis; LPS lipid A biosynthesis. In terms of biological role, catalyzes the last two sequential reactions in the de novo biosynthetic pathway for UDP-N-acetylglucosamine (UDP-GlcNAc). The C-terminal domain catalyzes the transfer of acetyl group from acetyl coenzyme A to glucosamine-1-phosphate (GlcN-1-P) to produce N-acetylglucosamine-1-phosphate (GlcNAc-1-P), which is converted into UDP-GlcNAc by the transfer of uridine 5-monophosphate (from uridine 5-triphosphate), a reaction catalyzed by the N-terminal domain. This is Bifunctional protein GlmU from Burkholderia pseudomallei (strain K96243).